The chain runs to 390 residues: 3-ketoacyl-CoA thiolase (390 aa).

The active-site Acyl-thioester intermediate is the Cys-95. Catalysis depends on proton acceptor residues His-346 and Cys-376.

The protein belongs to the thiolase-like superfamily. Thiolase family. Heterotetramer of two alpha chains (FadB) and two beta chains (FadA).

It localises to the cytoplasm. It carries out the reaction an acyl-CoA + acetyl-CoA = a 3-oxoacyl-CoA + CoA. The protein operates within lipid metabolism; fatty acid beta-oxidation. Its function is as follows. Catalyzes the final step of fatty acid oxidation in which acetyl-CoA is released and the CoA ester of a fatty acid two carbons shorter is formed. The chain is 3-ketoacyl-CoA thiolase from Psychrobacter sp. (strain PRwf-1).